Consider the following 80-residue polypeptide: Myrmicitoxin(1)-Pr1a (80 aa).

The first 23 residues, 1–23, serve as a signal peptide directing secretion; that stretch reads MEIPKLLYIAVIAIGLSGSLTWA. The propeptide occupies 24–57; it reads TPLANPLAEAEAEAKATAEATAEALAEALAEPEP. F79 carries the phenylalanine amide modification.

Belongs to the formicidae venom clade 1 family. In terms of tissue distribution, expressed by the venom gland.

The protein resides in the secreted. Its function is as follows. Vertebrate-selective toxin that causes pain by targeting voltage-gated sodium channels. The polypeptide is Myrmicitoxin(1)-Pr1a (Pogonomyrmex rugosus (Desert harvester ant)).